A 183-amino-acid polypeptide reads, in one-letter code: Capsid protein (183 aa).

The interval 136-183 (NAPILSTLPETTVVRRRGRSPRRRTPSPRRRRSQSPRRRRSQSPASQC) is disordered. Basic residues predominate over residues 149-176 (VRRRGRSPRRRTPSPRRRRSQSPRRRRS). Phosphoserine; by host occurs at positions 155, 162, and 170. A 1; half-length repeat occupies 155–161 (SPRRRTP). The 3 X 8 AA repeats of S-P-R-R-R-[PR]-S-Q stretch occupies residues 155 to 177 (SPRRRTPSPRRRRSQSPRRRRSQ). Positions 158–175 (RRTPSPRRRRSQSPRRRR) match the Bipartite nuclear localization signal motif. 2 consecutive repeat copies span residues 162-169 (SPRRRRSQ) and 170-177 (SPRRRRSQ). Residues 177-183 (QSPASQC) are RNA binding.

This sequence belongs to the orthohepadnavirus core antigen family. In terms of assembly, homodimerizes, then multimerizes. Interacts with cytosol exposed regions of viral L glycoprotein present in the reticulum-to-Golgi compartment. Interacts with human FLNB. Phosphorylated form interacts with host importin alpha; this interaction depends on the exposure of the NLS, which itself depends upon genome maturation and/or phosphorylation of the capsid protein. Interacts with host NUP153. In terms of processing, phosphorylated by host SRPK1, SRPK2, and maybe protein kinase C or GAPDH. Phosphorylation is critical for pregenomic RNA packaging. Protein kinase C phosphorylation is stimulated by HBx protein and may play a role in transport of the viral genome to the nucleus at the late step during the viral replication cycle.

Its subcellular location is the virion. The protein resides in the host cytoplasm. Functionally, self assembles to form an icosahedral capsid. Most capsids appear to be large particles with an icosahedral symmetry of T=4 and consist of 240 copies of capsid protein, though a fraction forms smaller T=3 particles consisting of 180 capsid proteins. Entering capsids are transported along microtubules to the nucleus. Phosphorylation of the capsid is thought to induce exposure of nuclear localization signal in the C-terminal portion of the capsid protein that allows binding to the nuclear pore complex via the importin (karyopherin-) alpha and beta. Capsids are imported in intact form through the nuclear pore into the nuclear basket, where it probably binds NUP153. Only capsids that contain the mature viral genome can release the viral DNA and capsid protein into the nucleoplasm. Immature capsids get stuck in the basket. Capsids encapsulate the pre-genomic RNA and the P protein. Pre-genomic RNA is reverse-transcribed into DNA while the capsid is still in the cytoplasm. The capsid can then either be directed to the nucleus, providing more genomes for transcription, or bud through the endoplasmic reticulum to provide new virions. The polypeptide is Capsid protein (Hepatitis B virus genotype F2 (isolate Brazil/w4B) (HBV-F)).